Here is a 326-residue protein sequence, read N- to C-terminus: Acetyl-coenzyme A carboxylase carboxyl transferase subunit alpha (326 aa).

Residues 44-298 enclose the CoA carboxyltransferase C-terminal domain; it reads QLESRAEQLR…KEALLFHLNT (255 aa).

It belongs to the AccA family. In terms of assembly, acetyl-CoA carboxylase is a heterohexamer composed of biotin carboxyl carrier protein (AccB), biotin carboxylase (AccC) and two subunits each of ACCase subunit alpha (AccA) and ACCase subunit beta (AccD).

It localises to the cytoplasm. It catalyses the reaction N(6)-carboxybiotinyl-L-lysyl-[protein] + acetyl-CoA = N(6)-biotinyl-L-lysyl-[protein] + malonyl-CoA. It functions in the pathway lipid metabolism; malonyl-CoA biosynthesis; malonyl-CoA from acetyl-CoA: step 1/1. In terms of biological role, component of the acetyl coenzyme A carboxylase (ACC) complex. First, biotin carboxylase catalyzes the carboxylation of biotin on its carrier protein (BCCP) and then the CO(2) group is transferred by the carboxyltransferase to acetyl-CoA to form malonyl-CoA. The protein is Acetyl-coenzyme A carboxylase carboxyl transferase subunit alpha of Synechocystis sp. (strain ATCC 27184 / PCC 6803 / Kazusa).